The following is a 333-amino-acid chain: tRNA N6-adenosine threonylcarbamoyltransferase (333 aa).

Residues His-111 and His-115 each contribute to the Fe cation site. Residues 134 to 138 (VVSGG), Asp-167, Gly-180, Asp-184, and Asn-273 each bind substrate. Asp-302 provides a ligand contact to Fe cation.

It belongs to the KAE1 / TsaD family. The cofactor is Fe(2+).

The protein resides in the cytoplasm. The catalysed reaction is L-threonylcarbamoyladenylate + adenosine(37) in tRNA = N(6)-L-threonylcarbamoyladenosine(37) in tRNA + AMP + H(+). Functionally, required for the formation of a threonylcarbamoyl group on adenosine at position 37 (t(6)A37) in tRNAs that read codons beginning with adenine. Is involved in the transfer of the threonylcarbamoyl moiety of threonylcarbamoyl-AMP (TC-AMP) to the N6 group of A37, together with TsaE and TsaB. TsaD likely plays a direct catalytic role in this reaction. In Anaeromyxobacter sp. (strain Fw109-5), this protein is tRNA N6-adenosine threonylcarbamoyltransferase.